Consider the following 440-residue polypeptide: Thymidine phosphorylase (440 aa).

It belongs to the thymidine/pyrimidine-nucleoside phosphorylase family. As to quaternary structure, homodimer.

The enzyme catalyses thymidine + phosphate = 2-deoxy-alpha-D-ribose 1-phosphate + thymine. It functions in the pathway pyrimidine metabolism; dTMP biosynthesis via salvage pathway; dTMP from thymine: step 1/2. In terms of biological role, the enzymes which catalyze the reversible phosphorolysis of pyrimidine nucleosides are involved in the degradation of these compounds and in their utilization as carbon and energy sources, or in the rescue of pyrimidine bases for nucleotide synthesis. The polypeptide is Thymidine phosphorylase (Escherichia coli (strain 55989 / EAEC)).